The primary structure comprises 289 residues: Phosphatidylinositol:ceramide inositolphosphotransferase 3 (289 aa).

Helical transmembrane passes span 33-53 (LVLA…GVHY), 77-97 (AFFS…WTFH), 115-135 (VFVY…ATQL), 169-189 (VIYG…LVFV), and 199-219 (RWIK…IIAS). Residue H181 is part of the active site. Catalysis depends on residues H222 and D226. Residues 223–243 (YTVDIVVAWYTVNLVMFYVDS) traverse the membrane as a helical segment. The disordered stretch occupies residues 249 to 289 (AERSSGPSPTPLLPLSTKDSKNKSKEDHQRLLNENNVADDH). Residues 266–279 (KDSKNKSKEDHQRL) are compositionally biased toward basic and acidic residues. The span at 280-289 (LNENNVADDH) shows a compositional bias: polar residues.

Belongs to the sphingomyelin synthase family. As to expression, mostly expressed in stems and flowers, and, to a lower extent, in leaves, roots and siliques.

It is found in the membrane. Functionally, catalyzes the transfer of the phosphorylinositol group from phosphatidylinositol (PI) to phytoceramide, an essential step in sphingolipid biosynthesis. The polypeptide is Phosphatidylinositol:ceramide inositolphosphotransferase 3 (IPCS3) (Arabidopsis thaliana (Mouse-ear cress)).